The primary structure comprises 543 residues: Neurofilament light polypeptide (543 aa).

Position 2 is an N-acetylserine (S2). The head stretch occupies residues 2–92; it reads SSFSYEPYYS…LKSIRTQEKA (91 aa). T21 is a glycosylation site (O-linked (GlcNAc) threonine). The residue at position 23 (R23) is an Asymmetric dimethylarginine; alternate. R23 is subject to Omega-N-methylarginine; alternate. A glycan (O-linked (GlcNAc) serine) is linked at S27. R30 is modified (omega-N-methylarginine). Y43 carries the phosphotyrosine modification. Phosphoserine occurs at positions 56, 67, and 103. Residues 90–400 enclose the IF rod domain; sequence EKAQLQDLND…KLLEGEETRL (311 aa). Residues 93-124 form a coil 1A region; that stretch reads QLQDLNDRFASFIERVHELEQQNKVLEAELLV. The interval 125–137 is linker 1; that stretch reads LRQKHSEPSRFRA. The segment at 138–234 is coil 1B; the sequence is LYEQEIRDLR…KVHEEEIAEL (97 aa). Residues 235–252 form a linker 12 region; the sequence is QAQIQYAQISVEMDVTKP. Positions 253-271 are coil 2A; it reads DLSAALKDIRAQYEKLAAK. The tract at residues 272-280 is linker 2; the sequence is NMQNAEEWF. A coil 2B region spans residues 281-396; the sequence is KSRFTVLTES…AAYRKLLEGE (116 aa). An epitope; recognized by IF-specific monoclonal antibody region spans residues 381–391; sequence ALDIEIAAYRK. The tract at residues 397–443 is tail, subdomain A; sequence ETRLSFTSVGSITSGYSQSSQVFGRSAYGGLQTSSYLMSTRSFPSYY. Residues 397–543 are tail; the sequence is ETRLSFTSVG…GEEQAAKKKD (147 aa). The interval 444–543 is tail, subdomain B (acidic); sequence TSHVQEEQIE…GEEQAAKKKD (100 aa). The segment at 462-543 is disordered; sequence KAEEAKDEPP…GEEQAAKKKD (82 aa). The segment covering 471–525 has biased composition (acidic residues); that stretch reads PSEGEAEEEEKDKEEAEEEEAAEEEEAAKEESEEAKEEEEGGEGEEGEETKEAEE. Phosphoserine is present on residues S472 and S502. The residue at position 520 (T520) is a Phosphothreonine. Residues 526 to 543 are compositionally biased toward basic and acidic residues; sequence EEKKVEGAGEEQAAKKKD.

This sequence belongs to the intermediate filament family. As to quaternary structure, forms homodimers (in vitro). Forms heterodimers with NEFH or NEFM; which can further hetero-oligomerize (in vitro). Forms heterodimers with INA (in vitro). Interacts with ARHGEF28. Interacts with TRIM2. In terms of processing, O-glycosylated. Phosphorylated in the head and rod regions by the PKC kinase PKN1, leading to the inhibition of polymerization. Post-translationally, ubiquitinated in the presence of TRIM2 and UBE2D1.

Its subcellular location is the cell projection. The protein resides in the axon. The protein localises to the cytoplasm. It localises to the cytoskeleton. Its function is as follows. Neurofilaments usually contain three intermediate filament proteins: NEFL, NEFM, and NEFH which are involved in the maintenance of neuronal caliber. May additionally cooperate with the neuronal intermediate filament proteins PRPH and INA to form neuronal filamentous networks. In Homo sapiens (Human), this protein is Neurofilament light polypeptide (NEFL).